The sequence spans 123 residues: Ribosome-binding factor A (123 aa).

This sequence belongs to the RbfA family. In terms of assembly, monomer. Binds 30S ribosomal subunits, but not 50S ribosomal subunits or 70S ribosomes.

The protein resides in the cytoplasm. One of several proteins that assist in the late maturation steps of the functional core of the 30S ribosomal subunit. Associates with free 30S ribosomal subunits (but not with 30S subunits that are part of 70S ribosomes or polysomes). Required for efficient processing of 16S rRNA. May interact with the 5'-terminal helix region of 16S rRNA. The chain is Ribosome-binding factor A from Desulfatibacillum aliphaticivorans.